A 456-amino-acid chain; its full sequence is ACT domain-containing protein ACR5 (456 aa).

ACT domains lie at 39 to 115 (VIKV…FSPS), 130 to 207 (VVEL…SSGR), 271 to 347 (IVMI…VSEG), and 349 to 432 (KLEL…PSPQ).

In terms of tissue distribution, expressed in stems and siliques.

May bind amino acids. The sequence is that of ACT domain-containing protein ACR5 from Arabidopsis thaliana (Mouse-ear cress).